We begin with the raw amino-acid sequence, 180 residues long: MSRIGKLPIAIPAGVTFTVTPDNVVTVKGSKGQLVKAMAKDINIAVEDNSVVVTRNDDEKKSRSLHGLTRALINNMVVGVTEGYSKTLELIGVGYRAQLQGKKLVMNLGFSHPVEIEAVEGVTFETPAATKVVIKGIDKELVGNVAADIRSWRKPEPYKGKGIKYDNEVIRRKEGKTGKK.

This sequence belongs to the universal ribosomal protein uL6 family. Part of the 50S ribosomal subunit.

This protein binds to the 23S rRNA, and is important in its secondary structure. It is located near the subunit interface in the base of the L7/L12 stalk, and near the tRNA binding site of the peptidyltransferase center. In Clostridium kluyveri (strain NBRC 12016), this protein is Large ribosomal subunit protein uL6.